The following is a 1946-amino-acid chain: 1,3-beta-glucan synthase component (1946 aa).

2 disordered regions span residues 1-127 and 152-198; these read MSGY…FSDF and YGEG…KEPY. Low complexity-rich tracts occupy residues 24–34, 43–60, and 91–109; these read GYYQDDQYYDQ, GDHAAQGDHGAQGTQGDG, and DDYYNNNQGYYDGEYNQGY. Residues 165-180 show a composition bias toward polar residues; that stretch reads QLSYGGNRSSGASTPN. Residues Asn171 and Asn290 are each glycosylated (N-linked (GlcNAc...) asparagine). The tract at residues 297–316 is disordered; sequence KRKAKKGKKKGGEAGNEAET. The next 6 helical transmembrane spans lie at 489–509, 537–557, 576–596, 618–638, 675–695, and 734–754; these read WFHLLLNFNRIWVIHLTMFWF, FSIVGFGGAIASLIQIFATLA, LLFLIVILVLNVAPGVKVFMF, IGIVHFVIAVFTFLFFSVMPL, FGLWLTVFGAKFGESYVYLTL, and IVLILMTFTDLIFFFLDTYLF. N-linked (GlcNAc...) asparagine glycosylation is found at Asn1017 and Asn1312. The next 5 helical transmembrane spans lie at 1356-1376, 1413-1433, 1500-1520, 1523-1543, and 1615-1635; these read NMFIMLSVQSFMLTLMSIGAL, CIISIFFVFFISFVPLIVQEL, FAGQSIYFGARLLMMLLFATS, WQPALTYFWIVLLGLIISPFL, and IFLTEILTPLLLAATTTVAYL. Asn1649 is a glycosylation site (N-linked (GlcNAc...) asparagine). The next 5 membrane-spanning stretches (helical) occupy residues 1667-1687, 1703-1723, 1738-1758, 1803-1823, and 1864-1884; these read LAVVAFAPIGINAGVLAAMFG, FGPVLAGIAHGAAAVFMIIFF, LAGIIAAMCIQRFIFKLIVSL, FSADFILGHWILFMMAPLILI, and AILYFVLFIIFLALVVAPGVI. N-linked (GlcNAc...) asparagine glycosylation occurs at Asn1918. A disordered region spans residues 1920-1946; the sequence is TEGKTETGTKAGGADASATDASKLRLF. The segment covering 1925-1940 has biased composition (low complexity); sequence ETGTKAGGADASATDA.

It belongs to the glycosyltransferase 48 family. As to quaternary structure, component of the 1,3-beta-glucan synthase (GS) complex composed of a catalytic subunit GLS1 and a regulatory subunit RHO1.

It localises to the membrane. The protein resides in the cell membrane. The enzyme catalyses [(1-&gt;3)-beta-D-glucosyl](n) + UDP-alpha-D-glucose = [(1-&gt;3)-beta-D-glucosyl](n+1) + UDP + H(+). Activated by iron ions. Inhibited by manganese, copper and zinc ions. Functionally, catalytic subunit of the 1,3-beta-glucan synthase (GS). Synthesizes 1,3-beta-glucan, a major structural component of the fungal cell wall. Involved in cell wall synthesis, maintenance and remodeling. The protein is 1,3-beta-glucan synthase component of Cordyceps militaris (strain CM01) (Caterpillar fungus).